The sequence spans 196 residues: UPF0340 protein TT_C0214 (196 aa).

Belongs to the UPF0340 family.

The chain is UPF0340 protein TT_C0214 from Thermus thermophilus (strain ATCC BAA-163 / DSM 7039 / HB27).